The chain runs to 763 residues: Hormone-sensitive lipase (763 aa).

The short motif at 350-352 (HGG) is the Involved in the stabilization of the negatively charged intermediate by the formation of the oxyanion hole element. Serine 424 is an active-site residue. Serine 552 bears the Phosphoserine mark. Position 554 is a phosphoserine; by AMPK (serine 554). Residues serine 595, serine 627, and serine 649 each carry the phosphoserine modification. Over residues 616-627 (AREEAEAKEGLS) the composition is skewed to basic and acidic residues. The segment at 616 to 652 (AREEAEAKEGLSAKDGSSRVSNAFPEGFHPRRTSQGA) is disordered. Catalysis depends on residues aspartate 692 and histidine 722.

It belongs to the 'GDXG' lipolytic enzyme family. In terms of assembly, monomer and homodimer. Interacts with CAVIN1 in the adipocyte cytoplasm. Interacts with PLIN5. Post-translationally, phosphorylation by AMPK reduces its translocation towards the lipid droplets.

The protein localises to the cell membrane. It is found in the membrane. The protein resides in the caveola. It localises to the cytoplasm. Its subcellular location is the cytosol. The protein localises to the lipid droplet. It catalyses the reaction a diacylglycerol + H2O = a monoacylglycerol + a fatty acid + H(+). The enzyme catalyses a triacylglycerol + H2O = a diacylglycerol + a fatty acid + H(+). It carries out the reaction a monoacylglycerol + H2O = glycerol + a fatty acid + H(+). The catalysed reaction is Hydrolyzes glycerol monoesters of long-chain fatty acids.. It catalyses the reaction 1,2-di-(9Z-octadecenoyl)-glycerol + (9Z)-octadecenoate + H(+) = 1,2,3-tri-(9Z-octadecenoyl)-glycerol + H2O. The enzyme catalyses 2,3-di-(9Z)-octadecenoyl-sn-glycerol + H2O = 2-(9Z-octadecenoyl)-glycerol + (9Z)-octadecenoate + H(+). It carries out the reaction cholesteryl (9Z-octadecenoate) + H2O = cholesterol + (9Z)-octadecenoate + H(+). The catalysed reaction is 1,2,3-tri-(9Z-octadecenoyl)-glycerol + H2O = di-(9Z)-octadecenoylglycerol + (9Z)-octadecenoate + H(+). It catalyses the reaction all-trans-retinyl hexadecanoate + H2O = all-trans-retinol + hexadecanoate + H(+). The enzyme catalyses 1,2-di-(9Z-octadecenoyl)-glycerol + H2O = (9Z-octadecenoyl)-glycerol + (9Z)-octadecenoate + H(+). It carries out the reaction 2-(5Z,8Z,11Z,14Z-eicosatetraenoyl)-glycerol + H2O = glycerol + (5Z,8Z,11Z,14Z)-eicosatetraenoate + H(+). The catalysed reaction is 1-(9Z-octadecenoyl)-glycerol + H2O = glycerol + (9Z)-octadecenoate + H(+). It catalyses the reaction 2-(9Z-octadecenoyl)-glycerol + H2O = glycerol + (9Z)-octadecenoate + H(+). The enzyme catalyses 1-O-hexadecyl-2-acetyl-sn-glycerol + H2O = 1-O-hexadecyl-sn-glycerol + acetate + H(+). It carries out the reaction 1,2-di-(9Z-octadecenoyl)-sn-glycerol + H2O = (9Z-octadecenoyl)-glycerol + (9Z)-octadecenoate + H(+). The catalysed reaction is 1,3-di-(9Z-octadecenoyl)-glycerol + H2O = 1-(9Z-octadecenoyl)-glycerol + (9Z)-octadecenoate + H(+). It catalyses the reaction 1,2-di-(9Z-octadecenoyl)-glycerol + H2O = 2-(9Z-octadecenoyl)-glycerol + (9Z)-octadecenoate + H(+). The protein operates within glycerolipid metabolism; triacylglycerol degradation. In terms of biological role, lipase with broad substrate specificity, catalyzing the hydrolysis of triacylglycerols (TAGs), diacylglycerols (DAGs), monoacylglycerols (MAGs), cholesteryl esters and retinyl esters. Shows a preferential hydrolysis of DAGs over TAGs and MAGs. Preferentially hydrolyzes fatty acid (FA) esters at the sn-3 position of the glycerol backbone in DAGs and FA esters at the sn-1 and sn-2 positions of the glycerol backbone in TAGs. Catalyzes the hydrolysis of 2-arachidonoylglycerol, an endocannabinoid and of 2-acetyl monoalkylglycerol ether, the penultimate precursor of the pathway for de novo synthesis of platelet-activating factor. In adipose tissue and heart, it primarily hydrolyzes stored triglycerides to free fatty acids, while in steroidogenic tissues, it principally converts cholesteryl esters to free cholesterol for steroid hormone production. The sequence is that of Hormone-sensitive lipase (LIPE) from Ictidomys tridecemlineatus (Thirteen-lined ground squirrel).